We begin with the raw amino-acid sequence, 467 residues long: Probable citrate synthase 2, mitochondrial (467 aa).

Catalysis depends on residues histidine 303, histidine 349, and aspartate 404.

Belongs to the citrate synthase family. As to quaternary structure, homodimer.

The protein resides in the mitochondrion matrix. It carries out the reaction oxaloacetate + acetyl-CoA + H2O = citrate + CoA + H(+). It participates in carbohydrate metabolism; tricarboxylic acid cycle; isocitrate from oxaloacetate: step 1/2. The polypeptide is Probable citrate synthase 2, mitochondrial (Aedes aegypti (Yellowfever mosquito)).